Consider the following 599-residue polypeptide: Proline--tRNA ligase (599 aa).

It belongs to the class-II aminoacyl-tRNA synthetase family. ProS type 1 subfamily. As to quaternary structure, homodimer.

It localises to the cytoplasm. It carries out the reaction tRNA(Pro) + L-proline + ATP = L-prolyl-tRNA(Pro) + AMP + diphosphate. Functionally, catalyzes the attachment of proline to tRNA(Pro) in a two-step reaction: proline is first activated by ATP to form Pro-AMP and then transferred to the acceptor end of tRNA(Pro). As ProRS can inadvertently accommodate and process non-cognate amino acids such as alanine and cysteine, to avoid such errors it has two additional distinct editing activities against alanine. One activity is designated as 'pretransfer' editing and involves the tRNA(Pro)-independent hydrolysis of activated Ala-AMP. The other activity is designated 'posttransfer' editing and involves deacylation of mischarged Ala-tRNA(Pro). The misacylated Cys-tRNA(Pro) is not edited by ProRS. This is Proline--tRNA ligase from Bifidobacterium animalis subsp. lactis (strain AD011).